Consider the following 182-residue polypeptide: Putative manganese efflux pump MntP 1 (182 aa).

6 helical membrane-spanning segments follow: residues Leu4–Ala24, Ile42–Ile62, Ser63–Tyr83, Leu103–Ile123, Val127–Leu147, and Ile162–Phe182.

It belongs to the MntP (TC 9.B.29) family.

The protein resides in the cell inner membrane. Its function is as follows. Probably functions as a manganese efflux pump. This chain is Putative manganese efflux pump MntP 1, found in Wolinella succinogenes (strain ATCC 29543 / DSM 1740 / CCUG 13145 / JCM 31913 / LMG 7466 / NCTC 11488 / FDC 602W) (Vibrio succinogenes).